The following is a 417-amino-acid chain: Protein-lysine 6-oxidase (417 aa).

Residues 1 to 21 (MRFAWTVLLLGPLQLCALVHC) form the signal peptide. Residues 22 to 168 (APPAAGQQQP…PPSRVDGMVG (147 aa)) constitute a propeptide, removed by BMP1. The interval 64–89 (YQPQRRRDPGAAVPGAANASAQQPRT) is disordered. Residues 73–84 (GAAVPGAANASA) show a composition bias toward low complexity. N81, N97, and N144 each carry an N-linked (GlcNAc...) asparagine glycan. The interval 137 to 174 (AGASRAENQTAPGEVPALSNLRPPSRVDGMVGDDPYNP) is disordered. A Sulfotyrosine modification is found at Y187. The tract at residues 213–417 (PDLVADPYYI…YASGCTISPY (205 aa)) is lysyl-oxidase like. Cystine bridges form between C238-C244, C291-C340, C324-C330, C351-C361, and C398-C412. Residues H292, H294, and H296 each coordinate Cu cation. A cross-link (lysine tyrosylquinone (Lys-Tyr)) is located at residues 320–355 (KASFCLEDTSCDYGYHRRFACTAHTQGLSPGCYDTY). Y355 carries the post-translational modification 2',4',5'-topaquinone.

It belongs to the lysyl oxidase family. In terms of assembly, interacts with MFAP4. Interacts (via propeptide) with EFEMP2; this interaction is strong and facilitates formation of ternary complexes with ELN during elastic fiber assembly; this interaction limits interaction of EFEMP2 with FBLN5. Cu cation is required as a cofactor. The cofactor is lysine tyrosylquinone residue. In terms of processing, the lysine tyrosylquinone cross-link (LTQ) is generated by condensation of the epsilon-amino group of a lysine with a topaquinone produced by oxidation of tyrosine. Proteolytically cleaved by BMP1 which removes the propeptide. Also proteolytically cleaved by ADAMTS2 and ADAMTS14, but not by ADAMTS3, at an additional cleavage site downstream of the BMP1 cleavage site. The propeptide plays a role in directing the deposition of this enzyme to elastic fibers, via interaction with tropoelastin. Cleavage by BMP1 to remove the propeptide does not increase enzymatic activity but increases binding to collagen. Cleavage by ADAMTS2 produces a form with reduced collagen-binding activity. Post-translationally, sulfated at Tyr-187 and also at either Tyr-183 or Tyr-184 which enhances binding to collagen. As to expression, heart, placenta, skeletal muscle, kidney, lung and pancreas.

It localises to the secreted. The protein localises to the extracellular space. The enzyme catalyses L-lysyl-[protein] + O2 + H2O = (S)-2-amino-6-oxohexanoyl-[protein] + H2O2 + NH4(+). Functionally, responsible for the post-translational oxidative deamination of peptidyl lysine residues in precursors to fibrous collagen and elastin. Regulator of Ras expression. May play a role in tumor suppression. Plays a role in the aortic wall architecture. This is Protein-lysine 6-oxidase (LOX) from Homo sapiens (Human).